Here is a 247-residue protein sequence, read N- to C-terminus: Mannose-P-dolichol utilization defect 1 protein (247 aa).

Ala-2 is subject to N-acetylalanine. 7 helical membrane passes run Cys-37–Val-57, Leu-74–Ile-94, Phe-100–Val-120, Val-128–Leu-145, Leu-151–Leu-171, Leu-185–Val-205, and Met-213–Phe-233. Residues Lys-39–Glu-105 enclose the PQ-loop 1 domain. Residues Ala-159 to Val-216 enclose the PQ-loop 2 domain.

The protein belongs to the MPDU1 (TC 2.A.43.3) family.

The protein resides in the membrane. Required for normal utilization of mannose-dolichol phosphate (Dol-P-Man) in the synthesis of N-linked and O-linked oligosaccharides and GPI anchors. This Mus musculus (Mouse) protein is Mannose-P-dolichol utilization defect 1 protein (Mpdu1).